Reading from the N-terminus, the 421-residue chain is Serine hydroxymethyltransferase (421 aa).

(6S)-5,6,7,8-tetrahydrofolate is bound by residues Leu121 and 125-127; that span reads GHL. Lys230 carries the post-translational modification N6-(pyridoxal phosphate)lysine. 355–357 is a binding site for (6S)-5,6,7,8-tetrahydrofolate; the sequence is SPF.

This sequence belongs to the SHMT family. In terms of assembly, homodimer. Requires pyridoxal 5'-phosphate as cofactor.

It localises to the cytoplasm. The catalysed reaction is (6R)-5,10-methylene-5,6,7,8-tetrahydrofolate + glycine + H2O = (6S)-5,6,7,8-tetrahydrofolate + L-serine. Its pathway is one-carbon metabolism; tetrahydrofolate interconversion. It functions in the pathway amino-acid biosynthesis; glycine biosynthesis; glycine from L-serine: step 1/1. Catalyzes the reversible interconversion of serine and glycine with tetrahydrofolate (THF) serving as the one-carbon carrier. This reaction serves as the major source of one-carbon groups required for the biosynthesis of purines, thymidylate, methionine, and other important biomolecules. Also exhibits THF-independent aldolase activity toward beta-hydroxyamino acids, producing glycine and aldehydes, via a retro-aldol mechanism. This is Serine hydroxymethyltransferase from Psychromonas ingrahamii (strain DSM 17664 / CCUG 51855 / 37).